A 152-amino-acid polypeptide reads, in one-letter code: Transcriptional repressor NrdR (152 aa).

Residues 3-34 (CPKCTSIEDKVIDSRISKEGSTIRRRRECLEC) fold into a zinc finger. The ATP-cone domain occupies 49–139 (IVVIKRDGRR…VYKEFRDVSE (91 aa)).

The protein belongs to the NrdR family. Zn(2+) serves as cofactor.

Functionally, negatively regulates transcription of bacterial ribonucleotide reductase nrd genes and operons by binding to NrdR-boxes. The sequence is that of Transcriptional repressor NrdR from Opitutus terrae (strain DSM 11246 / JCM 15787 / PB90-1).